Reading from the N-terminus, the 250-residue chain is 3-deoxy-manno-octulosonate cytidylyltransferase (250 aa).

The protein belongs to the KdsB family.

The protein resides in the cytoplasm. The enzyme catalyses 3-deoxy-alpha-D-manno-oct-2-ulosonate + CTP = CMP-3-deoxy-beta-D-manno-octulosonate + diphosphate. It functions in the pathway nucleotide-sugar biosynthesis; CMP-3-deoxy-D-manno-octulosonate biosynthesis; CMP-3-deoxy-D-manno-octulosonate from 3-deoxy-D-manno-octulosonate and CTP: step 1/1. The protein operates within bacterial outer membrane biogenesis; lipopolysaccharide biosynthesis. Activates KDO (a required 8-carbon sugar) for incorporation into bacterial lipopolysaccharide in Gram-negative bacteria. This is 3-deoxy-manno-octulosonate cytidylyltransferase from Legionella pneumophila (strain Lens).